The chain runs to 174 residues: Translationally-controlled tumor protein homolog 1 (174 aa).

A TCTP domain is found at 1-174 (MRVFKDIVGY…FKDGLESVKY (174 aa)).

Belongs to the TCTP family.

Its subcellular location is the cytoplasm. Its function is as follows. Involved in calcium binding and microtubule stabilization. This is Translationally-controlled tumor protein homolog 1 from Dictyostelium discoideum (Social amoeba).